Consider the following 935-residue polypeptide: Coiled-coil domain-containing protein 191 (935 aa).

4 coiled-coil regions span residues 189-324 (RLTM…ENQQ), 366-438 (YTRS…ALLK), 554-589 (RHVFQQQLIEKQKKKLQEQQKTILELKKNQRLAEAQ), and 660-740 (KAME…LEAI). Disordered stretches follow at residues 596–661 (SAVT…ILKA) and 678–715 (EKKKKQEEEKLAQLKAQEEERQKREAEEKEAQLERKRE).

In Macaca fascicularis (Crab-eating macaque), this protein is Coiled-coil domain-containing protein 191 (CCDC191).